Here is a 1178-residue protein sequence, read N- to C-terminus: DNA-directed RNA polymerase I subunit 2 (1178 aa).

The C4-type zinc-finger motif lies at 1097 to 1137 (CSLCGSLLTSSVVNVQQKKLIQEIGKLPPGRTPKKVTCYSC).

Belongs to the RNA polymerase beta chain family. In terms of assembly, component of the RNA polymerase I (Pol I) complex consisting of at least 13 subunits.

It is found in the nucleus. The catalysed reaction is RNA(n) + a ribonucleoside 5'-triphosphate = RNA(n+1) + diphosphate. DNA-dependent RNA polymerase catalyzes the transcription of DNA into RNA using the four ribonucleoside triphosphates as substrates. Second largest core component of RNA polymerase I which synthesizes ribosomal RNA precursors. Proposed to contribute to the polymerase catalytic activity and forms the polymerase active center together with the largest subunit. Pol I is composed of mobile elements and NRPA2 is part of the core element with the central large cleft and probably a clamp element that moves to open and close the cleft. In terms of biological role, essential for the completion of the three rounds of mitosis in female megaspores required for the development of mature gametophytes. The chain is DNA-directed RNA polymerase I subunit 2 from Arabidopsis thaliana (Mouse-ear cress).